The chain runs to 173 residues: MARVEL domain-containing protein 1 (173 aa).

Residue M1 is modified to N-acetylmethionine. Residues 1 to 29 are Cytoplasmic-facing; it reads MLPPPPRQPPPQARAARGAVRLQRPFLRS. The 141-residue stretch at 26-166 folds into the MARVEL domain; it reads FLRSPLGVLR…SALYGCGRRC (141 aa). A helical membrane pass occupies residues 30-50; it reads PLGVLRLLQLLAGAAFWITIA. Over 51-59 the chain is Extracellular; it reads TSKYQGPVH. A helical membrane pass occupies residues 60–80; that stretch reads FALFVSVLFWLLTLGLYFLTL. Topologically, residues 81–94 are cytoplasmic; it reads LGKHELVPVLGSRW. The helical transmembrane segment at 95–115 threads the bilayer; that stretch reads LMVNVAHDVLAAALYGAATGI. At 116–138 the chain is on the extracellular side; that stretch reads MSDQMQRHSYCNLKDYPLPCAYH. A helical membrane pass occupies residues 139-159; sequence AFLAAAVCGGVCHGLYLLSAL. At 160–173 the chain is on the cytoplasmic side; the sequence is YGCGRRCQGKQEVA.

Widely expressed in normal tissues. Down-regulated in multiple primary tumors.

The protein resides in the cell membrane. Its subcellular location is the cytoplasm. The protein localises to the cytoskeleton. It localises to the nucleus. Functionally, microtubule-associated protein that exhibits cell cycle-dependent localization and can inhibit cell proliferation and migration. In Homo sapiens (Human), this protein is MARVEL domain-containing protein 1 (MARVELD1).